Here is a 331-residue protein sequence, read N- to C-terminus: MKKVIFSGIQPSGQLTLGNYIGALKQFGQFQDEYECFYCIVDEHAITVPQDRLKLREQTRSLAALYLAVGLDPEKATLFIQSEVAAHAQAAWILQCNVYIGELERMTQFKDKSDGKAGVSAGLLTYPPLMAADILLYQTDLVPVGEDQKQHIELTRDLAERFNKKHADIFTMPEVFIPKQGARVMSLQDPTKKMSKSDANLKNAIFLLDPPATIRKKIKSAVTDSSGIIEYNKEEKPGVSNLLTIYSVITGETISTIEEKYVGKGYGDFKTDLAELVVAELEPIQERYYAYLKSEELDTILDAGAEKAARVANKTLKKMENGVGLGRKRRR.

Residues 10–12 and 18–19 each bind ATP; these read QPS and GN. The short motif at 11 to 19 is the 'HIGH' region element; sequence PSGQLTLGN. Residue aspartate 133 participates in L-tryptophan binding. ATP-binding positions include 145–147, valine 184, and 193–197; these read GED and KMSKS. The 'KMSKS' region motif lies at 193–197; sequence KMSKS.

It belongs to the class-I aminoacyl-tRNA synthetase family. As to quaternary structure, homodimer.

Its subcellular location is the cytoplasm. It carries out the reaction tRNA(Trp) + L-tryptophan + ATP = L-tryptophyl-tRNA(Trp) + AMP + diphosphate + H(+). In terms of biological role, catalyzes the attachment of tryptophan to tRNA(Trp). The polypeptide is Tryptophan--tRNA ligase (Listeria monocytogenes serotype 4b (strain F2365)).